The primary structure comprises 490 residues: Betaine aldehyde dehydrogenase (490 aa).

Residues S26, I27, and D93 each contribute to the K(+) site. An NAD(+)-binding site is contributed by G150–W152. The active-site Charge relay system is the K162. K176 to E179 is a binding site for NAD(+). A K(+)-binding site is contributed by V180. Residue G230–T233 coordinates NAD(+). Position 246 (L246) interacts with K(+). The active-site Proton acceptor is E252. NAD(+) contacts are provided by G254, C286, and E387. The active-site Nucleophile is the C286. C286 bears the Cysteine sulfenic acid (-SOH) mark. K(+) contacts are provided by K457 and G460. E464 (charge relay system) is an active-site residue.

It belongs to the aldehyde dehydrogenase family. In terms of assembly, dimer of dimers. K(+) is required as a cofactor.

The catalysed reaction is betaine aldehyde + NAD(+) + H2O = glycine betaine + NADH + 2 H(+). The protein operates within amine and polyamine biosynthesis; betaine biosynthesis via choline pathway; betaine from betaine aldehyde: step 1/1. In terms of biological role, involved in the biosynthesis of the osmoprotectant glycine betaine. Catalyzes the irreversible oxidation of betaine aldehyde to the corresponding acid. The polypeptide is Betaine aldehyde dehydrogenase (Ectopseudomonas mendocina (strain ymp) (Pseudomonas mendocina)).